Here is a 116-residue protein sequence, read N- to C-terminus: Cysteine proteinase inhibitor 1 (116 aa).

Residues 1–26 (MVPKPLSLLLFLLLALSAAVVGGRKL) form the signal peptide. A Cystatin domain is found at 30–89 (GGWRPIESLNSAEVQDVAQFAVSEHNKQANDELQYQSVVRGYTQVVAGTNYRLVIAAKDG). The short motif at 73-77 (QVVAG) is the Secondary area of contact element. A glycan (N-linked (GlcNAc...) asparagine) is linked at Asn-109.

This sequence belongs to the cystatin family. Phytocystatin subfamily. In terms of processing, glycosylated.

The protein localises to the secreted. In terms of biological role, specific inhibitor of papain family cysteine proteinases. Inhibits papain, chymopapain, bromelain, ficin, human cathepsins B, H and L, actinidain and house dustmite endopeptidase 1, but does not inhibit human bleomycin hydrolase. Inhibits papain with an IC(50) of 2.47 nM. Does not inhibit cysteine proteinases belonging to other families including clostripain, streptopain and calpain. This is Cysteine proteinase inhibitor 1 from Actinidia deliciosa (Kiwi).